The chain runs to 187 residues: dCTP deaminase, dUMP-forming (187 aa).

DCTP-binding positions include 101-106 (KSSLGR) and D119. E129 acts as the Proton donor/acceptor in catalysis. Positions 148, 162, and 174 each coordinate dCTP.

It belongs to the dCTP deaminase family. As to quaternary structure, homotrimer.

It catalyses the reaction dCTP + 2 H2O = dUMP + NH4(+) + diphosphate. It functions in the pathway pyrimidine metabolism; dUMP biosynthesis; dUMP from dCTP: step 1/1. Functionally, bifunctional enzyme that catalyzes both the deamination of dCTP to dUTP and the hydrolysis of dUTP to dUMP without releasing the toxic dUTP intermediate. This chain is dCTP deaminase, dUMP-forming, found in Corynebacterium kroppenstedtii (strain DSM 44385 / JCM 11950 / CIP 105744 / CCUG 35717).